The chain runs to 537 residues: Zinc metalloproteinase nas-23 (537 aa).

The signal sequence occupies residues 1-16 (MRFLILVLAGSIGIYG). A propeptide spanning residues 17 to 111 (VNLPKIPKLS…EQLDHSRTKR (95 aa)) is cleaved from the precursor. Asn-77 carries an N-linked (GlcNAc...) asparagine glycan. In terms of domain architecture, Peptidase M12A spans 116–311 (NAMYPKTIWL…AKINRHYNCE (196 aa)). Cystine bridges form between Cys-156/Cys-310, Cys-178/Cys-199, Cys-314/Cys-334, Cys-336/Cys-345, Cys-356/Cys-385, and Cys-412/Cys-433. His-207 is a binding site for Zn(2+). Residue Glu-208 is part of the active site. Zn(2+)-binding residues include His-211 and His-217. The EGF-like domain maps to 306-346 (RHYNCEKNCKNKITCLNGGYQHPKNCKICVCPPGYGGSDCK). The 116-residue stretch at 356-471 (CTGVLVAGET…VQLRYSTVDG (116 aa)) folds into the CUB domain. Asn-481 carries N-linked (GlcNAc...) asparagine glycosylation.

Zn(2+) serves as cofactor. As to expression, expressed in the hypodermis, rectum and to a lesser extent in pharyngeal muscles and intestine.

It is found in the secreted. Functionally, metalloprotease. The sequence is that of Zinc metalloproteinase nas-23 (nas-23) from Caenorhabditis elegans.